We begin with the raw amino-acid sequence, 316 residues long: Pantothenate kinase (316 aa).

96–103 (GSVAVGKS) contributes to the ATP binding site.

Belongs to the prokaryotic pantothenate kinase family.

Its subcellular location is the cytoplasm. It catalyses the reaction (R)-pantothenate + ATP = (R)-4'-phosphopantothenate + ADP + H(+). The protein operates within cofactor biosynthesis; coenzyme A biosynthesis; CoA from (R)-pantothenate: step 1/5. The chain is Pantothenate kinase from Shouchella clausii (strain KSM-K16) (Alkalihalobacillus clausii).